Here is a 350-residue protein sequence, read N- to C-terminus: Hydroxymethylglutaryl-CoA synthase (350 aa).

Asp30 is a (3S)-3-hydroxy-3-methylglutaryl-CoA binding site. Glu82 (proton donor/acceptor) is an active-site residue. Residues Cys114, Ser155, Thr203, and His236 each coordinate (3S)-3-hydroxy-3-methylglutaryl-CoA. Cys114 (acyl-thioester intermediate) is an active-site residue. His236 acts as the Proton donor/acceptor in catalysis. CoA is bound at residue Arg241. Arg245, Asn268, and Ser298 together coordinate (3S)-3-hydroxy-3-methylglutaryl-CoA.

Belongs to the thiolase-like superfamily. Archaeal HMG-CoA synthase family. In terms of assembly, interacts with acetoacetyl-CoA thiolase that catalyzes the precedent step in the pathway and with a DUF35 protein. The acetoacetyl-CoA thiolase/HMG-CoA synthase complex channels the intermediate via a fused CoA-binding site, which allows for efficient coupling of the endergonic thiolase reaction with the exergonic HMGCS reaction.

The catalysed reaction is acetoacetyl-CoA + acetyl-CoA + H2O = (3S)-3-hydroxy-3-methylglutaryl-CoA + CoA + H(+). Its pathway is metabolic intermediate biosynthesis; (R)-mevalonate biosynthesis; (R)-mevalonate from acetyl-CoA: step 2/3. Its function is as follows. Catalyzes the condensation of acetyl-CoA with acetoacetyl-CoA to form 3-hydroxy-3-methylglutaryl-CoA (HMG-CoA). Functions in the mevalonate (MVA) pathway leading to isopentenyl diphosphate (IPP), a key precursor for the biosynthesis of isoprenoid compounds that are building blocks of archaeal membrane lipids. The protein is Hydroxymethylglutaryl-CoA synthase of Pyrobaculum calidifontis (strain DSM 21063 / JCM 11548 / VA1).